Consider the following 329-residue polypeptide: Malate dehydrogenase (329 aa).

Residue 12–18 (GAAGQIG) coordinates NAD(+). Positions 95 and 101 each coordinate substrate. NAD(+)-binding positions include N108, Q115, and 132-134 (VGN). Residues N134 and R165 each contribute to the substrate site. Residue H190 is the Proton acceptor of the active site.

Belongs to the LDH/MDH superfamily. MDH type 2 family.

The enzyme catalyses (S)-malate + NAD(+) = oxaloacetate + NADH + H(+). Its function is as follows. Catalyzes the reversible oxidation of malate to oxaloacetate. The sequence is that of Malate dehydrogenase from Herminiimonas arsenicoxydans.